A 74-amino-acid chain; its full sequence is MSAGTKASELRELGDEELLAKLREAKEELFNLRFQAATGQLENHGRLKAVRKDIARIYTLMRERELGIETVESA.

It belongs to the universal ribosomal protein uL29 family.

The protein is Large ribosomal subunit protein uL29 of Streptomyces avermitilis (strain ATCC 31267 / DSM 46492 / JCM 5070 / NBRC 14893 / NCIMB 12804 / NRRL 8165 / MA-4680).